A 411-amino-acid polypeptide reads, in one-letter code: L-cysteine:1D-myo-inositol 2-amino-2-deoxy-alpha-D-glucopyranoside ligase (411 aa).

Cysteine 43 lines the Zn(2+) pocket. L-cysteinyl-5'-AMP-binding positions include 43–46, threonine 58, and 81–83; these read CGIT and NVT. The 'HIGH' region motif lies at 45–55; the sequence is ITPYDATHLGH. Positions 186-191 match the 'ERGGDP' region motif; it reads QRGGDP. Tryptophan 226 contributes to the L-cysteinyl-5'-AMP binding site. Residue cysteine 230 coordinates Zn(2+). Position 248 to 250 (248 to 250) interacts with L-cysteinyl-5'-AMP; it reads GSD. Histidine 255 is a Zn(2+) binding site. Residue isoleucine 282 participates in L-cysteinyl-5'-AMP binding. The 'KMSKS' region motif lies at 288 to 292; it reads KMSKS.

It belongs to the class-I aminoacyl-tRNA synthetase family. MshC subfamily. Monomer. The cofactor is Zn(2+).

The catalysed reaction is 1D-myo-inositol 2-amino-2-deoxy-alpha-D-glucopyranoside + L-cysteine + ATP = 1D-myo-inositol 2-(L-cysteinylamino)-2-deoxy-alpha-D-glucopyranoside + AMP + diphosphate + H(+). Its function is as follows. Catalyzes the ATP-dependent condensation of GlcN-Ins and L-cysteine to form L-Cys-GlcN-Ins. This chain is L-cysteine:1D-myo-inositol 2-amino-2-deoxy-alpha-D-glucopyranoside ligase, found in Mycobacterium marinum (strain ATCC BAA-535 / M).